Consider the following 284-residue polypeptide: Pantothenate synthetase (284 aa).

M30–H37 provides a ligand contact to ATP. H37 acts as the Proton donor in catalysis. Q61 is a (R)-pantoate binding site. A beta-alanine-binding site is contributed by Q61. G149–D152 lines the ATP pocket. Q155 is a (R)-pantoate binding site. ATP-binding positions include V178 and M186–R189.

It belongs to the pantothenate synthetase family. As to quaternary structure, homodimer.

The protein localises to the cytoplasm. The enzyme catalyses (R)-pantoate + beta-alanine + ATP = (R)-pantothenate + AMP + diphosphate + H(+). The protein operates within cofactor biosynthesis; (R)-pantothenate biosynthesis; (R)-pantothenate from (R)-pantoate and beta-alanine: step 1/1. In terms of biological role, catalyzes the condensation of pantoate with beta-alanine in an ATP-dependent reaction via a pantoyl-adenylate intermediate. The polypeptide is Pantothenate synthetase (Saccharophagus degradans (strain 2-40 / ATCC 43961 / DSM 17024)).